Here is a 204-residue protein sequence, read N- to C-terminus: Large ribosomal subunit protein uL4 (204 aa).

Residues 48–75 (HTKGRSDVSGGGKKPWRQKGRGGARAGS) form a disordered region.

The protein belongs to the universal ribosomal protein uL4 family. As to quaternary structure, part of the 50S ribosomal subunit.

Functionally, one of the primary rRNA binding proteins, this protein initially binds near the 5'-end of the 23S rRNA. It is important during the early stages of 50S assembly. It makes multiple contacts with different domains of the 23S rRNA in the assembled 50S subunit and ribosome. Forms part of the polypeptide exit tunnel. This is Large ribosomal subunit protein uL4 from Campylobacter fetus subsp. fetus (strain 82-40).